The following is a 181-amino-acid chain: Regulator of G-protein signaling 10 (181 aa).

Residues 1–32 (MFNRAVSRLSRKRPPSDIHDSDGSSSSSHQSL) are disordered. Over residues 23–32 (GSSSSSHQSL) the composition is skewed to low complexity. A phosphoserine mark is found at Ser24 and Ser41. The 116-residue stretch at 41–156 (SLENLLEDPE…LKSDLFLKHK (116 aa)) folds into the RGS domain. Cys74 carries the S-palmitoyl cysteine lipid modification. The interval 158-181 (TEEEEEDLPDAQTAAKRASRIYNT) is disordered. Position 176 is a phosphoserine (Ser176).

Interacts with GNAZ, GNAI1 and GNAI3. Associates specifically with the activated, GTP-bound forms of GNAZ and GNAI3.

It is found in the cytoplasm. The protein localises to the cytosol. Its subcellular location is the nucleus. Functionally, regulates G protein-coupled receptor signaling cascades, including signaling downstream of the muscarinic acetylcholine receptor CHRM2. Inhibits signal transduction by increasing the GTPase activity of G protein alpha subunits, thereby driving them into their inactive GDP-bound form. Modulates the activity of potassium channels that are activated in response to CHRM2 signaling. Activity on GNAZ is inhibited by palmitoylation of the G-protein. In Homo sapiens (Human), this protein is Regulator of G-protein signaling 10 (RGS10).